Consider the following 381-residue polypeptide: Magnesium transporter MRS2-I (381 aa).

The next 2 membrane-spanning stretches (helical) occupy residues 316 to 336 and 353 to 373; these read LFLSSGTVCLSLYSLVAGIFG and WVVLVSGLFCAFMFVSIVAYA. Positions 336 to 338 match the Required for magnesium transport activity motif; sequence GMN.

It belongs to the CorA metal ion transporter (MIT) (TC 1.A.35.5) family.

Its subcellular location is the membrane. Functionally, magnesium transporter that may mediate the influx of magnesium. The sequence is that of Magnesium transporter MRS2-I (MRS2-I) from Oryza sativa subsp. indica (Rice).